The primary structure comprises 156 residues: MAREVKLTKAGYERLMQQLERERERLQEATKILQELMESSDDYDDSGLEAAKQEKARIEARIDSLEDILSRAVILEEGSGEVIGLGSVVELEDPLSGERLSVQVVSPAEANVLDTPMKISDASPMGKALLGHRVGDVLSLDTPKGKREFRVVAIHG.

Residues 1–74 (MAREVKLTKA…LEDILSRAVI (74 aa)) adopt a coiled-coil conformation.

It belongs to the GreA/GreB family. Interacts with RNAP.

Inhibits all catalytic activities of RNA polymerase (RNAP) by partially occluding its substrate-binding site and preventing NTP binding. The protein is Transcription inhibitor protein Gfh1 (gfh1) of Thermus thermophilus (strain ATCC BAA-163 / DSM 7039 / HB27).